Reading from the N-terminus, the 379-residue chain is Serine/threonine-protein kinase spe-6 (379 aa).

The Protein kinase domain occupies 26–302; the sequence is WKVLRNIYSG…SQAATEHQVT (277 aa). ATP contacts are provided by residues 32–40 and Lys-55; that span reads IYSGPFSDV. Asp-147 serves as the catalytic Proton acceptor. The tract at residues 331–379 is disordered; the sequence is ASAKLDAKDNANESMDIEFDDMPPKEGISKSLSAEKSCTKNVETARTEK. Positions 360 to 372 are enriched in polar residues; that stretch reads KSLSAEKSCTKNV.

The protein belongs to the protein kinase superfamily. CK1 Ser/Thr protein kinase family.

The catalysed reaction is L-seryl-[protein] + ATP = O-phospho-L-seryl-[protein] + ADP + H(+). The enzyme catalyses L-threonyl-[protein] + ATP = O-phospho-L-threonyl-[protein] + ADP + H(+). Serine/threonine-protein kinase which is involved in spermatogenesis. In spermatocytes, regulates meiosis and the localization and assembly of major sperm protein (MSP) into fibrous bodies. In addition, may suppress the initiation of spermiogenesis downstream of spe-8, spe-12, spe-27 and spe-29. The sequence is that of Serine/threonine-protein kinase spe-6 from Caenorhabditis elegans.